Consider the following 144-residue polypeptide: Snaclec coagulation factor IX/factor X-binding protein subunit B1 (144 aa).

The first 23 residues, Met-1 to Ala-23, serve as a signal peptide directing secretion. 3 disulfides stabilise this stretch: Cys-25-Cys-36, Cys-53-Cys-142, and Cys-119-Cys-134. The C-type lectin domain maps to Tyr-32–Glu-143.

This sequence belongs to the snaclec family. In terms of assembly, heterodimer of subunits A and B1; disulfide-linked. As to expression, expressed by the venom gland.

The protein resides in the secreted. Its function is as follows. Anticoagulant protein which binds to the gamma-carboxyglutamic acid-domain regions of factors IX (F9) and factor X (F10) in the presence of calcium with a 1 to 1 stoichiometry. This chain is Snaclec coagulation factor IX/factor X-binding protein subunit B1, found in Trimeresurus stejnegeri (Chinese green tree viper).